The sequence spans 155 residues: Ribonuclease H (155 aa).

The region spanning 5 to 146 (DQKPVIIHTD…ADQLARDGLT (142 aa)) is the RNase H type-1 domain. Mg(2+) is bound by residues Asp-14, Glu-52, Asp-74, and Asp-138. The tract at residues 133–155 (ENERADQLARDGLTENRMKSRVK) is disordered.

It belongs to the RNase H family. As to quaternary structure, monomer. Mg(2+) serves as cofactor.

It is found in the cytoplasm. The catalysed reaction is Endonucleolytic cleavage to 5'-phosphomonoester.. In terms of biological role, endonuclease that specifically degrades the RNA of RNA-DNA hybrids. The sequence is that of Ribonuclease H from Rhodopseudomonas palustris (strain ATCC BAA-98 / CGA009).